Here is a 369-residue protein sequence, read N- to C-terminus: Glutamate 5-kinase (369 aa).

Position 7 (Lys-7) interacts with ATP. Substrate contacts are provided by Ser-48, Asp-135, and Asn-147. ATP contacts are provided by residues 167–168 and 208–214; these read TD and SGGMASK. A PUA domain is found at 275–353; sequence AGALHLDEGA…HEIAALLGIE (79 aa).

The protein belongs to the glutamate 5-kinase family.

It localises to the cytoplasm. The catalysed reaction is L-glutamate + ATP = L-glutamyl 5-phosphate + ADP. It functions in the pathway amino-acid biosynthesis; L-proline biosynthesis; L-glutamate 5-semialdehyde from L-glutamate: step 1/2. Its function is as follows. Catalyzes the transfer of a phosphate group to glutamate to form L-glutamate 5-phosphate. In Gloeobacter violaceus (strain ATCC 29082 / PCC 7421), this protein is Glutamate 5-kinase.